Here is a 372-residue protein sequence, read N- to C-terminus: Probable arabinan endo-1,5-alpha-L-arabinosidase B (372 aa).

Residues 1–16 (MTVLVALFCLVTWTLC) form the signal peptide. Residues 23–34 (STQGTQQPQQPE) are compositionally biased toward low complexity. A disordered region spans residues 23-52 (STQGTQQPQQPEKTPHPHPQPEDAFPPTHA). D59 (proton acceptor) is an active-site residue. An N-linked (GlcNAc...) asparagine glycan is attached at N120. The active-site Proton donor is E252. N363 carries N-linked (GlcNAc...) asparagine glycosylation.

The protein belongs to the glycosyl hydrolase 43 family.

The protein resides in the secreted. It carries out the reaction Endohydrolysis of (1-&gt;5)-alpha-arabinofuranosidic linkages in (1-&gt;5)-arabinans.. It participates in glycan metabolism; L-arabinan degradation. In terms of biological role, endo-1,5-alpha-L-arabinanase involved in degradation of pectin. Its preferred substrate is linear 1,5-alpha-L-arabinan. The sequence is that of Probable arabinan endo-1,5-alpha-L-arabinosidase B (abnB) from Aspergillus fumigatus (strain ATCC MYA-4609 / CBS 101355 / FGSC A1100 / Af293) (Neosartorya fumigata).